Reading from the N-terminus, the 491-residue chain is Protein nucleotidyltransferase YdiU (491 aa).

ATP is bound by residues glycine 92, glycine 94, arginine 95, lysine 115, aspartate 127, glycine 128, arginine 178, and arginine 185. Residue aspartate 254 is the Proton acceptor of the active site. Positions 255 and 264 each coordinate Mg(2+). Aspartate 264 lines the ATP pocket.

The protein belongs to the SELO family. The cofactor is Mg(2+). Mn(2+) is required as a cofactor.

The enzyme catalyses L-seryl-[protein] + ATP = 3-O-(5'-adenylyl)-L-seryl-[protein] + diphosphate. It catalyses the reaction L-threonyl-[protein] + ATP = 3-O-(5'-adenylyl)-L-threonyl-[protein] + diphosphate. The catalysed reaction is L-tyrosyl-[protein] + ATP = O-(5'-adenylyl)-L-tyrosyl-[protein] + diphosphate. It carries out the reaction L-histidyl-[protein] + UTP = N(tele)-(5'-uridylyl)-L-histidyl-[protein] + diphosphate. The enzyme catalyses L-seryl-[protein] + UTP = O-(5'-uridylyl)-L-seryl-[protein] + diphosphate. It catalyses the reaction L-tyrosyl-[protein] + UTP = O-(5'-uridylyl)-L-tyrosyl-[protein] + diphosphate. Its function is as follows. Nucleotidyltransferase involved in the post-translational modification of proteins. It can catalyze the addition of adenosine monophosphate (AMP) or uridine monophosphate (UMP) to a protein, resulting in modifications known as AMPylation and UMPylation. The polypeptide is Protein nucleotidyltransferase YdiU (Pseudarthrobacter chlorophenolicus (strain ATCC 700700 / DSM 12829 / CIP 107037 / JCM 12360 / KCTC 9906 / NCIMB 13794 / A6) (Arthrobacter chlorophenolicus)).